The sequence spans 482 residues: Major cardiolipin synthase ClsA (482 aa).

Transmembrane regions (helical) follow at residues 3–23 (ISSI…IIVI) and 34–54 (WAWL…YLLF). PLD phosphodiesterase domains are found at residues 217 to 244 (LNYR…GDEY) and 395 to 422 (DNGF…DVRS). Residues H222, K224, D229, H400, K402, and D407 contribute to the active site.

The protein belongs to the phospholipase D family. Cardiolipin synthase subfamily.

It localises to the cell membrane. The catalysed reaction is 2 a 1,2-diacyl-sn-glycero-3-phospho-(1'-sn-glycerol) = a cardiolipin + glycerol. In terms of biological role, catalyzes the reversible phosphatidyl group transfer from one phosphatidylglycerol molecule to another to form cardiolipin (CL) (diphosphatidylglycerol) and glycerol. The chain is Major cardiolipin synthase ClsA (clsA) from Bacillus subtilis (strain 168).